The following is a 128-amino-acid chain: Large ribosomal subunit protein bL20c (128 aa).

It belongs to the bacterial ribosomal protein bL20 family.

The protein resides in the plastid. It is found in the chloroplast. Its function is as follows. Binds directly to 23S ribosomal RNA and is necessary for the in vitro assembly process of the 50S ribosomal subunit. It is not involved in the protein synthesizing functions of that subunit. In Nicotiana sylvestris (Wood tobacco), this protein is Large ribosomal subunit protein bL20c.